We begin with the raw amino-acid sequence, 516 residues long: MTDIHNHKILILDFGSQYTQLIARRVREVGVFCEIFPHDIADDFIKDYHAKGIILSGGPESVYDSDVKAPEIVFELGVPVLGICYGMQTMVMQHGGEVKGADQSEFGKAIVNILKSSENIFSNLKTEQSVWMSHSDKVTQTGEHFEVIASSTNAPVAAVAHKSKPFYGVQFHPETTHTENGKQIIENFALNICKCDALWNIENIIENDIKEIKKQVGSDRVILGLSGGVDSSVVAAILHEAIGDQLTCIFVDTGLLRLNEGDQVMEVFAEHMDINVIRVNAKNRFLDALKGIGDPEEKRKIIGKLFVDIFDEEAAKIENAKWLAQGTIYSDVIESAGNSQSKAHVIKSHHNVGGLPKEMKLKLLEPLRELFKDEVRKLGLGLGLPYNMLYRHPFPGPGLGVRILGEIKKEYVETLQKADAIFTEELYKHNLYHDISQAFGVFLPVKSVGVVGDQRRYEYVIALRAVVSIDFMTATWANLPYDFLSIVSNRIVNEVKQVSRVVYDVTGKPPGTIEWE.

One can recognise a Glutamine amidotransferase type-1 domain in the interval 8-198 (KILILDFGSQ…ALNICKCDAL (191 aa)). Cys-84 acts as the Nucleophile in catalysis. Active-site residues include His-172 and Glu-174. Residues 199-391 (WNIENIIEND…LGLPYNMLYR (193 aa)) form the GMPS ATP-PPase domain. 226–232 (SGGVDSS) is an ATP binding site.

Homodimer.

It catalyses the reaction XMP + L-glutamine + ATP + H2O = GMP + L-glutamate + AMP + diphosphate + 2 H(+). It participates in purine metabolism; GMP biosynthesis; GMP from XMP (L-Gln route): step 1/1. Functionally, catalyzes the synthesis of GMP from XMP. The polypeptide is GMP synthase [glutamine-hydrolyzing] (Francisella philomiragia subsp. philomiragia (strain ATCC 25017 / CCUG 19701 / FSC 153 / O#319-036)).